Here is a 447-residue protein sequence, read N- to C-terminus: MIKIYDTMTRSLQDFIPLNEGKVNMYVCGPTVYNYIHIGNARSVVAFDTIRRYFEYCGYQVNYISNFTDVDDKIIKGAAEAGMDTKSFSDKFISAFMEDVAALGVKPATKNPRVIDYMDEIIDFVKVLVDKEFAYEANGDVYFRVSKSHHYAKLANKTLEDLEIGASGRVDGEGEIKENPLDFALWKSAKSGEVSWESPWGKGRPGWHIECSVMATEIFGDTIDIHGGGADLEFPHHTNEIAQSEAKTGKTFANYWMHNGFVNVDNEKMSKSLGNFITVHDMLKSVDGQVIRFFLATQQYRKPVNFTEKAVHDAEVNLKYLKNTFNLPIQENANDEELEQFVKAFQGAMDDDFNTANGITVIFEMAKWINSGHYTSRVKETFAELLEIFGIVFQEEVLDADIESLIEQRQEARANRDFATADRIRDELAKQGIKLLDTKDGVRWTRD.

Cys-28 contributes to the Zn(2+) binding site. The 'HIGH' region signature appears at Pro-30–Asn-40. Positions 211, 236, and 240 each coordinate Zn(2+). Positions Lys-268–Ser-272 match the 'KMSKS' region motif. Lys-271 is a binding site for ATP.

It belongs to the class-I aminoacyl-tRNA synthetase family. Monomer. Zn(2+) serves as cofactor.

Its subcellular location is the cytoplasm. It catalyses the reaction tRNA(Cys) + L-cysteine + ATP = L-cysteinyl-tRNA(Cys) + AMP + diphosphate. This is Cysteine--tRNA ligase from Streptococcus agalactiae serotype Ia (strain ATCC 27591 / A909 / CDC SS700).